Consider the following 193-residue polypeptide: Threonylcarbamoyl-AMP synthase (193 aa).

The 180-residue stretch at 14–193 (SRLQQRARKQ…IDLESGRVLR (180 aa)) folds into the YrdC-like domain.

The protein belongs to the SUA5 family. TsaC subfamily.

It localises to the cytoplasm. It catalyses the reaction L-threonine + hydrogencarbonate + ATP = L-threonylcarbamoyladenylate + diphosphate + H2O. In terms of biological role, required for the formation of a threonylcarbamoyl group on adenosine at position 37 (t(6)A37) in tRNAs that read codons beginning with adenine. Catalyzes the conversion of L-threonine, HCO(3)(-)/CO(2) and ATP to give threonylcarbamoyl-AMP (TC-AMP) as the acyladenylate intermediate, with the release of diphosphate. The sequence is that of Threonylcarbamoyl-AMP synthase from Chromobacterium violaceum (strain ATCC 12472 / DSM 30191 / JCM 1249 / CCUG 213 / NBRC 12614 / NCIMB 9131 / NCTC 9757 / MK).